The primary structure comprises 468 residues: Fibrinogen beta chain (468 aa).

Pyrrolidone carboxylic acid is present on glutamine 1. Over residues 1-10 the composition is skewed to acidic residues; the sequence is QFPTDYDEGQ. Residues 1 to 54 are disordered; the sequence is QFPTDYDEGQDDRPKVGLGARGHRPYDKKKEEAPSLRPVPPPISGGGYRARPAT. Threonine 4 carries an O-linked (GalNAc...) threonine glycan. Tyrosine 6 is modified (sulfotyrosine). The segment covering 24–34 has biased composition (basic and acidic residues); sequence RPYDKKKEEAP. Residues 88–204 adopt a coiled-coil conformation; it reads KLQDTLVRQE…TQMEYCRTPC (117 aa). 2 disulfides stabilise this stretch: cysteine 208–cysteine 293 and cysteine 218–cysteine 247. The Fibrinogen C-terminal domain maps to 209–465; it reads NIPVVSGKEC…KMSMKIRPYF (257 aa). N-linked (GlcNAc...) asparagine glycosylation is present at asparagine 371. A disulfide bond links cysteine 401 and cysteine 414.

As to quaternary structure, heterohexamer; disulfide linked. Contains 2 sets of 3 non-identical chains (alpha, beta and gamma). The 2 heterotrimers are in head to head conformation with the N-termini in a small central domain. Conversion of fibrinogen to fibrin is triggered by thrombin, which cleaves fibrinopeptides A and B from alpha and beta chains, and thus exposes the N-terminal polymerization sites responsible for the formation of the soft clot. The soft clot is converted into the hard clot by factor XIIIA which catalyzes the epsilon-(gamma-glutamyl)lysine cross-linking between gamma chains (stronger) and between alpha chains (weaker) of different monomers. In terms of tissue distribution, detected in blood plasma (at protein level).

It localises to the secreted. Its function is as follows. Cleaved by the protease thrombin to yield monomers which, together with fibrinogen alpha (FGA) and fibrinogen gamma (FGG), polymerize to form an insoluble fibrin matrix. Fibrin has a major function in hemostasis as one of the primary components of blood clots. In addition, functions during the early stages of wound repair to stabilize the lesion and guide cell migration during re-epithelialization. Was originally thought to be essential for platelet aggregation, based on in vitro studies using anticoagulated blood. However subsequent studies have shown that it is not absolutely required for thrombus formation in vivo. Enhances expression of SELP in activated platelets. Maternal fibrinogen is essential for successful pregnancy. Fibrin deposition is also associated with infection, where it protects against IFNG-mediated hemorrhage. May also facilitate the antibacterial immune response via both innate and T-cell mediated pathways. The polypeptide is Fibrinogen beta chain (FGB) (Bos taurus (Bovine)).